Here is a 426-residue protein sequence, read N- to C-terminus: Tyrosine--tRNA ligase (426 aa).

L-tyrosine is bound at residue tyrosine 35. Residues 40–49 (PTAPSLHIGH) carry the 'HIGH' region motif. Positions 174 and 178 each coordinate L-tyrosine. The 'KMSKS' region signature appears at 234-238 (KFGKT). Lysine 237 contacts ATP. Residues 358–418 (PRVVDALVAT…WAVIRRGRRA (61 aa)) enclose the S4 RNA-binding domain.

This sequence belongs to the class-I aminoacyl-tRNA synthetase family. TyrS type 1 subfamily. In terms of assembly, homodimer.

The protein resides in the cytoplasm. It catalyses the reaction tRNA(Tyr) + L-tyrosine + ATP = L-tyrosyl-tRNA(Tyr) + AMP + diphosphate + H(+). Functionally, catalyzes the attachment of tyrosine to tRNA(Tyr) in a two-step reaction: tyrosine is first activated by ATP to form Tyr-AMP and then transferred to the acceptor end of tRNA(Tyr). The polypeptide is Tyrosine--tRNA ligase (Acidothermus cellulolyticus (strain ATCC 43068 / DSM 8971 / 11B)).